Consider the following 231-residue polypeptide: Thymidylate kinase (231 aa).

10–17 (GGEGAGKT) contacts ATP.

This sequence belongs to the thymidylate kinase family.

The catalysed reaction is dTMP + ATP = dTDP + ADP. Phosphorylation of dTMP to form dTDP in both de novo and salvage pathways of dTTP synthesis. The chain is Thymidylate kinase from Acaryochloris marina (strain MBIC 11017).